Consider the following 586-residue polypeptide: GRB2-associated-binding protein 3 (586 aa).

The PH domain maps to 5 to 117 (DAVCTGWLVK…WVHSISQVCN (113 aa)). Disordered regions lie at residues 149–171 (AHAASSSLPRDDPNTNAVATEET) and 281–335 (SSTI…KKPE). Over residues 283–292 (TIQVDKNQGS) the composition is skewed to polar residues. Residues 316 to 326 (HLSERRQEEWS) are compositionally biased toward basic and acidic residues. A Phosphoserine modification is found at Ser-344. The segment at 401-453 (GASGLGPHCSPDDYIPMNSGSISSPLPELPANLEPPPVNRDLKPQRKSRPPPL) is disordered. Ser-482 carries the phosphoserine modification.

Belongs to the GAB family. Interacts with PIK3R/p85, SHP2 and GRAP2/MONA. May interact with Grb2. Post-translationally, phosphorylated on tyrosine residue(s) after macrophage colony-stimulating factor (M-CSF) receptor stimulation.

The chain is GRB2-associated-binding protein 3 (GAB3) from Homo sapiens (Human).